The following is a 425-amino-acid chain: Dual-specificity RNA methyltransferase RlmN (425 aa).

The active-site Proton acceptor is Glu136. The 248-residue stretch at 142–389 (GDDRGTLCVS…VRTPRGRDIL (248 aa)) folds into the Radical SAM core domain. Cys149 and Cys392 form a disulfide bridge. 3 residues coordinate [4Fe-4S] cluster: Cys156, Cys160, and Cys163. S-adenosyl-L-methionine contacts are provided by residues 218 to 219 (GE), Ser250, 272 to 274 (SLH), and Asn349. Cys392 functions as the S-methylcysteine intermediate in the catalytic mechanism.

The protein belongs to the radical SAM superfamily. RlmN family. Requires [4Fe-4S] cluster as cofactor.

The protein localises to the cytoplasm. The catalysed reaction is adenosine(2503) in 23S rRNA + 2 reduced [2Fe-2S]-[ferredoxin] + 2 S-adenosyl-L-methionine = 2-methyladenosine(2503) in 23S rRNA + 5'-deoxyadenosine + L-methionine + 2 oxidized [2Fe-2S]-[ferredoxin] + S-adenosyl-L-homocysteine. It catalyses the reaction adenosine(37) in tRNA + 2 reduced [2Fe-2S]-[ferredoxin] + 2 S-adenosyl-L-methionine = 2-methyladenosine(37) in tRNA + 5'-deoxyadenosine + L-methionine + 2 oxidized [2Fe-2S]-[ferredoxin] + S-adenosyl-L-homocysteine. Specifically methylates position 2 of adenine 2503 in 23S rRNA and position 2 of adenine 37 in tRNAs. m2A2503 modification seems to play a crucial role in the proofreading step occurring at the peptidyl transferase center and thus would serve to optimize ribosomal fidelity. The sequence is that of Dual-specificity RNA methyltransferase RlmN from Methylorubrum populi (strain ATCC BAA-705 / NCIMB 13946 / BJ001) (Methylobacterium populi).